We begin with the raw amino-acid sequence, 342 residues long: Erlin-1 (342 aa).

The Cytoplasmic segment spans residues M1 to A6. The helical transmembrane segment at V7–I23 threads the bilayer. The Lumenal portion of the chain corresponds to H24–H342. N-linked (GlcNAc...) asparagine glycosylation occurs at N106. The segment at S308 to H342 is disordered.

It belongs to the band 7/mec-2 family.

The protein resides in the endoplasmic reticulum membrane. In terms of biological role, mediates the endoplasmic reticulum-associated degradation (ERAD) of inositol 1,4,5-trisphosphate receptors (IP3Rs). Involved in regulation of cellular cholesterol homeostasis by regulation the SREBP signaling pathway. Binds cholesterol and may promote ER retention of the SCAP-SREBF complex. This chain is Erlin-1, found in Danio rerio (Zebrafish).